The following is a 274-amino-acid chain: Thiazole synthase (274 aa).

The active-site Schiff-base intermediate with DXP is the lysine 115. Residues glycine 176, 202–203 (AG), and 224–225 (NS) contribute to the 1-deoxy-D-xylulose 5-phosphate site.

This sequence belongs to the ThiG family. Homotetramer. Forms heterodimers with either ThiH or ThiS.

It localises to the cytoplasm. The enzyme catalyses [ThiS sulfur-carrier protein]-C-terminal-Gly-aminoethanethioate + 2-iminoacetate + 1-deoxy-D-xylulose 5-phosphate = [ThiS sulfur-carrier protein]-C-terminal Gly-Gly + 2-[(2R,5Z)-2-carboxy-4-methylthiazol-5(2H)-ylidene]ethyl phosphate + 2 H2O + H(+). Its pathway is cofactor biosynthesis; thiamine diphosphate biosynthesis. Its function is as follows. Catalyzes the rearrangement of 1-deoxy-D-xylulose 5-phosphate (DXP) to produce the thiazole phosphate moiety of thiamine. Sulfur is provided by the thiocarboxylate moiety of the carrier protein ThiS. In vitro, sulfur can be provided by H(2)S. This Psychrobacter cryohalolentis (strain ATCC BAA-1226 / DSM 17306 / VKM B-2378 / K5) protein is Thiazole synthase.